The primary structure comprises 227 residues: Octanoyltransferase (227 aa).

Positions 35–222 (EAYENRIIMC…ELGRLLNEKK (188 aa)) constitute a BPL/LPL catalytic domain. Residues 80–87 (RGGDITYH), 152–154 (AIG), and 165–167 (GLA) each bind substrate. Residue Cys-183 is the Acyl-thioester intermediate of the active site.

This sequence belongs to the LipB family.

The protein resides in the cytoplasm. The enzyme catalyses octanoyl-[ACP] + L-lysyl-[protein] = N(6)-octanoyl-L-lysyl-[protein] + holo-[ACP] + H(+). Its pathway is protein modification; protein lipoylation via endogenous pathway; protein N(6)-(lipoyl)lysine from octanoyl-[acyl-carrier-protein]: step 1/2. In terms of biological role, catalyzes the transfer of endogenously produced octanoic acid from octanoyl-acyl-carrier-protein onto the lipoyl domains of lipoate-dependent enzymes. Lipoyl-ACP can also act as a substrate although octanoyl-ACP is likely to be the physiological substrate. This Bacteroides thetaiotaomicron (strain ATCC 29148 / DSM 2079 / JCM 5827 / CCUG 10774 / NCTC 10582 / VPI-5482 / E50) protein is Octanoyltransferase.